Here is a 467-residue protein sequence, read N- to C-terminus: Pachytene checkpoint protein 2 homolog (467 aa).

209–216 (GPPGTGKT) provides a ligand contact to ATP.

It belongs to the AAA ATPase family. PCH2 subfamily.

Its subcellular location is the chromosome. Plays a key role in chromosome recombination during meiosis. Mediates meiotic chromosome remodeling and crossover maturation. This Arabidopsis thaliana (Mouse-ear cress) protein is Pachytene checkpoint protein 2 homolog.